A 238-amino-acid polypeptide reads, in one-letter code: Urease subunit alpha (238 aa).

The segment at 1 to 102 (MKLTPKELDK…LVTVHTPIEA (102 aa)) is urease gamma. Positions 103–238 (NGKLVPGELF…DDNYVKTIKE (136 aa)) are urease beta.

This sequence in the N-terminal section; belongs to the urease gamma subunit family. In the C-terminal section; belongs to the urease beta subunit family. Heterohexamer of 3 UreA (alpha) and 3 UreB (beta) subunits.

It localises to the cytoplasm. The enzyme catalyses urea + 2 H2O + H(+) = hydrogencarbonate + 2 NH4(+). It functions in the pathway nitrogen metabolism; urea degradation; CO(2) and NH(3) from urea (urease route): step 1/1. The sequence is that of Urease subunit alpha from Helicobacter pylori (strain P12).